Consider the following 158-residue polypeptide: MMKCLLIATGERVPTWVAQGFAEYHKRLSYWLPLELVEIEPSLRGKNHDPQQAIEDEGRRVMAALPKQPYAVTLDVKGKSLNSEQLAKRMEHWRGLGRNLVFLIGGPEGHSQEVLNISNERWSLGPLTLPHMLVRLIVVEQLYRAATILTNHPYHRGK.

S-adenosyl-L-methionine-binding positions include Leu74, Gly105, and 124–129; that span reads LGPLTL.

This sequence belongs to the RNA methyltransferase RlmH family. As to quaternary structure, homodimer.

It is found in the cytoplasm. The enzyme catalyses pseudouridine(1915) in 23S rRNA + S-adenosyl-L-methionine = N(3)-methylpseudouridine(1915) in 23S rRNA + S-adenosyl-L-homocysteine + H(+). Functionally, specifically methylates the pseudouridine at position 1915 (m3Psi1915) in 23S rRNA. The sequence is that of Ribosomal RNA large subunit methyltransferase H from Xylella fastidiosa (strain 9a5c).